Consider the following 223-residue polypeptide: Cytidylate kinase (223 aa).

10–18 (GPAGSGKSS) contacts ATP.

The protein belongs to the cytidylate kinase family. Type 1 subfamily.

The protein localises to the cytoplasm. The enzyme catalyses CMP + ATP = CDP + ADP. It catalyses the reaction dCMP + ATP = dCDP + ADP. The polypeptide is Cytidylate kinase (Pseudothermotoga lettingae (strain ATCC BAA-301 / DSM 14385 / NBRC 107922 / TMO) (Thermotoga lettingae)).